The primary structure comprises 479 residues: Sulfate adenylyltransferase subunit 1 (479 aa).

The region spanning 25-239 is the tr-type G domain; it reads KSLLRFLTCG…EVLETVDIQR (215 aa). A G1 region spans residues 34-41; it reads GSVDDGKS. 34–41 contributes to the GTP binding site; that stretch reads GSVDDGKS. The tract at residues 92–96 is G2; it reads GITID. Residues 113 to 116 form a G3 region; it reads DTPG. GTP-binding positions include 113–117 and 168–171; these read DTPGH and NKMD. Positions 168 to 171 are G4; it reads NKMD. Residues 206–208 are G5; the sequence is SAL.

It belongs to the TRAFAC class translation factor GTPase superfamily. Classic translation factor GTPase family. CysN/NodQ subfamily. Heterodimer composed of CysD, the smaller subunit, and CysN.

The catalysed reaction is sulfate + ATP + H(+) = adenosine 5'-phosphosulfate + diphosphate. The protein operates within sulfur metabolism; hydrogen sulfide biosynthesis; sulfite from sulfate: step 1/3. Its function is as follows. With CysD forms the ATP sulfurylase (ATPS) that catalyzes the adenylation of sulfate producing adenosine 5'-phosphosulfate (APS) and diphosphate, the first enzymatic step in sulfur assimilation pathway. APS synthesis involves the formation of a high-energy phosphoric-sulfuric acid anhydride bond driven by GTP hydrolysis by CysN coupled to ATP hydrolysis by CysD. This chain is Sulfate adenylyltransferase subunit 1, found in Salmonella typhi.